Here is a 303-residue protein sequence, read N- to C-terminus: Ferrochelatase (303 aa).

Fe cation-binding residues include His185 and Glu262.

This sequence belongs to the ferrochelatase family.

It localises to the cytoplasm. The enzyme catalyses heme b + 2 H(+) = protoporphyrin IX + Fe(2+). It functions in the pathway porphyrin-containing compound metabolism; protoheme biosynthesis; protoheme from protoporphyrin-IX: step 1/1. Catalyzes the ferrous insertion into protoporphyrin IX. The sequence is that of Ferrochelatase from Campylobacter jejuni (strain RM1221).